A 509-amino-acid polypeptide reads, in one-letter code: ESX-2 secretion system protein eccD2 (509 aa).

The next 11 membrane-spanning stretches (helical) occupy residues 135-155 (LTAA…VLAL), 170-190 (AMAG…WWGW), 196-216 (LFSG…ACAP), 222-242 (AAHA…IGVA), 248-268 (QTAV…VAAV), 281-301 (ICVL…ALWV), 364-384 (VQVG…WGVL), 389-409 (PWAW…ITQG), 418-438 (AVAL…KYAL), 449-469 (LWPA…ALVV), and 487-507 (VLAM…FAWL).

The protein belongs to the EccD/Snm4 family. In terms of assembly, part of the ESX-2 / type VII secretion system (T7SS), which is composed of cytosolic and membrane components.

The protein localises to the cell membrane. The chain is ESX-2 secretion system protein eccD2 (eccD2) from Mycobacterium tuberculosis (strain CDC 1551 / Oshkosh).